The primary structure comprises 1085 residues: Toxin VasX (1085 aa).

The segment at 1 to 20 (MSNPNQAAKTGQTNDAQNPA) is disordered. 4 helical membrane passes run 753–773 (ALGE…AISA), 813–833 (IALV…ESWG), 860–880 (IIFY…PSIA), and 884–904 (AGWM…GVIL).

Its subcellular location is the secreted. It is found in the host membrane. Toxin secreted by the type VI (T6SS) secretion system that acts on prokaryotic target cells. Acts in conjunction with VasW, an accessory protein to VasX, to compromise the inner membrane of prokaryotic target cells. This is Toxin VasX from Vibrio cholerae serotype O1 (strain ATCC 39315 / El Tor Inaba N16961).